The sequence spans 258 residues: Phosphate import ATP-binding protein PstB 2 (258 aa).

Residues 12-253 (IQVRDLNFYY…PQQKQTEDYI (242 aa)) form the ABC transporter domain. 44 to 51 (GPSGCGKS) lines the ATP pocket.

It belongs to the ABC transporter superfamily. Phosphate importer (TC 3.A.1.7) family. As to quaternary structure, the complex is composed of two ATP-binding proteins (PstB), two transmembrane proteins (PstC and PstA) and a solute-binding protein (PstS).

Its subcellular location is the cell inner membrane. The catalysed reaction is phosphate(out) + ATP + H2O = ADP + 2 phosphate(in) + H(+). Its function is as follows. Part of the ABC transporter complex PstSACB involved in phosphate import. Responsible for energy coupling to the transport system. This is Phosphate import ATP-binding protein PstB 2 from Yersinia pestis bv. Antiqua (strain Nepal516).